The sequence spans 230 residues: Metaxin-2 homolog (230 aa).

It belongs to the metaxin family. As to quaternary structure, associates with the mitochondrial contact site and cristae organizing system (MICOS) complex (also known as MINOS or MitOS complex).

The protein resides in the mitochondrion outer membrane. Functionally, involved in transport of proteins into the mitochondrion. This chain is Metaxin-2 homolog (mtx-2), found in Caenorhabditis elegans.